The sequence spans 34 residues: Beta-theraphotoxin-Pmu1a (34 aa).

Intrachain disulfides connect Cys3-Cys18, Cys10-Cys23, and Cys17-Cys30. Leu34 carries the post-translational modification Leucine amide.

Belongs to the neurotoxin 10 (Hwtx-1) family. 34 (Jztx-26) subfamily. Expressed by the venom gland.

It localises to the secreted. Functionally, spider venom neurotoxin that blocks voltage-gated sodium channels Nav1.3/SCN3A and Nav1.8/SCN10A in human (IC(50)=2 uM and IC(50)=4 uM, respectively) and rat (IC(50)=2 uM and IC(50)=2.5 uM, respectively). In Pterinochilus murinus (Mombasa golden starburst baboon spider), this protein is Beta-theraphotoxin-Pmu1a.